The following is a 162-amino-acid chain: D-aminoacyl-tRNA deacylase (162 aa).

Residues 145–146 carry the Gly-cisPro motif, important for rejection of L-amino acids motif; sequence GP.

It belongs to the DTD family. As to quaternary structure, homodimer.

It localises to the cytoplasm. It catalyses the reaction glycyl-tRNA(Ala) + H2O = tRNA(Ala) + glycine + H(+). The catalysed reaction is a D-aminoacyl-tRNA + H2O = a tRNA + a D-alpha-amino acid + H(+). Its function is as follows. An aminoacyl-tRNA editing enzyme that deacylates mischarged D-aminoacyl-tRNAs. Also deacylates mischarged glycyl-tRNA(Ala), protecting cells against glycine mischarging by AlaRS. Acts via tRNA-based rather than protein-based catalysis; rejects L-amino acids rather than detecting D-amino acids in the active site. By recycling D-aminoacyl-tRNA to D-amino acids and free tRNA molecules, this enzyme counteracts the toxicity associated with the formation of D-aminoacyl-tRNA entities in vivo and helps enforce protein L-homochirality. In Bifidobacterium longum (strain DJO10A), this protein is D-aminoacyl-tRNA deacylase.